Here is a 248-residue protein sequence, read N- to C-terminus: Probable septum site-determining protein MinC (248 aa).

The segment at 94 to 125 is disordered; it reads GMPPAMRGGQPAADFEAPAGEPQANPGAPEPQ.

It belongs to the MinC family. Interacts with MinD and FtsZ.

Its function is as follows. Cell division inhibitor that blocks the formation of polar Z ring septums. Rapidly oscillates between the poles of the cell to destabilize FtsZ filaments that have formed before they mature into polar Z rings. Prevents FtsZ polymerization. This chain is Probable septum site-determining protein MinC, found in Brucella abortus (strain S19).